A 177-amino-acid polypeptide reads, in one-letter code: Translation initiation factor IF-3 (177 aa).

The protein belongs to the IF-3 family. In terms of assembly, monomer.

Its subcellular location is the cytoplasm. In terms of biological role, IF-3 binds to the 30S ribosomal subunit and shifts the equilibrium between 70S ribosomes and their 50S and 30S subunits in favor of the free subunits, thus enhancing the availability of 30S subunits on which protein synthesis initiation begins. This Nostoc punctiforme (strain ATCC 29133 / PCC 73102) protein is Translation initiation factor IF-3.